A 291-amino-acid chain; its full sequence is Protease HtpX homolog (291 aa).

The next 2 membrane-spanning stretches (helical) occupy residues 4 to 24 (ILLF…VASL) and 39 to 59 (GSLL…SLLI). Histidine 144 is a binding site for Zn(2+). The active site involves glutamate 145. Zn(2+) is bound at residue histidine 148. 2 consecutive transmembrane segments (helical) span residues 159–179 (LIQG…AFAI) and 199–219 (ITTV…VAWF). Residue glutamate 224 participates in Zn(2+) binding.

This sequence belongs to the peptidase M48B family. Zn(2+) is required as a cofactor.

The protein localises to the cell inner membrane. This Albidiferax ferrireducens (strain ATCC BAA-621 / DSM 15236 / T118) (Rhodoferax ferrireducens) protein is Protease HtpX homolog.